The primary structure comprises 171 residues: Lipoprotein signal peptidase (171 aa).

A run of 3 helical transmembrane segments spans residues 8 to 28, 64 to 84, and 99 to 119; these read SFLWLSAVAFVVDLLTKYIVV, WQQYFFILLALAISGMLVYFL, and ALIIGGALANMVDRAYNGFVV. Catalysis depends on residues D120 and D138. A helical membrane pass occupies residues 133–153; it reads VFNIADIAICIGAGLLALDAF.

It belongs to the peptidase A8 family.

It is found in the cell inner membrane. It carries out the reaction Release of signal peptides from bacterial membrane prolipoproteins. Hydrolyzes -Xaa-Yaa-Zaa-|-(S,diacylglyceryl)Cys-, in which Xaa is hydrophobic (preferably Leu), and Yaa (Ala or Ser) and Zaa (Gly or Ala) have small, neutral side chains.. The protein operates within protein modification; lipoprotein biosynthesis (signal peptide cleavage). In terms of biological role, this protein specifically catalyzes the removal of signal peptides from prolipoproteins. This Haemophilus influenzae (strain PittGG) protein is Lipoprotein signal peptidase.